The following is a 447-amino-acid chain: BAG family molecular chaperone regulator 5 (447 aa).

5 BAG domains span residues 9–86, 95–167, 182–260, 275–350, and 365–442; these read SISR…EQNA, QNIF…EDCM, SVAK…DLEE, SILK…DLKE, and SHKA…DLKS.

Binds to the ATPase domain of HSP/HSP70 chaperones. Binds PRKN. Interacts with HSPA8 and JPH2. Expressed in the heart.

Functionally, co-chaperone for HSP/HSP70 proteins. It functions as a nucleotide-exchange factor promoting the release of ADP from HSP70, thereby activating HSP70-mediated protein refolding. Has an essential role in maintaining proteostasis at junctional membrane complexes (JMC), where it may function as a scaffold between the HSPA8 chaperone and JMC proteins enabling correct, HSPA8-dependent JMC protein folding. Inhibits both auto-ubiquitination of PRKN and ubiquitination of target proteins by PRKN. The protein is BAG family molecular chaperone regulator 5 (BAG5) of Homo sapiens (Human).